A 241-amino-acid polypeptide reads, in one-letter code: Small ribosomal subunit protein uS2 (241 aa).

Belongs to the universal ribosomal protein uS2 family.

The sequence is that of Small ribosomal subunit protein uS2 from Photorhabdus laumondii subsp. laumondii (strain DSM 15139 / CIP 105565 / TT01) (Photorhabdus luminescens subsp. laumondii).